A 288-amino-acid polypeptide reads, in one-letter code: Protein PGR (288 aa).

A run of 7 helical transmembrane segments spans residues 1–21, 29–49, 91–111, 123–143, 177–197, 210–230, and 268–288; these read METSPQFRLIFAVIISSLIAF, LDLSGGIAGFLVMTIHFTAGF, VLCNSGIASVLVVIACTLTGW, IVTALIGGIIGHYACCNGDTW, LLAALAAGTTVGLTFLIFGLF, LLVIPLSALAGLCGSLIDSIL, and VNFVSILLTSFLTSIASVYIF.

Belongs to the TMEM19 family. In terms of tissue distribution, expressed in the vasculature of leaves, roots, inflorescences, siliques, anther filaments and sepals. Detected primarily in the phloem tissues, including in the root ans shoot apical meristems.

The protein resides in the cell membrane. In terms of biological role, involved in the glucose-triggered developmental leaf growth process. The chain is Protein PGR from Arabidopsis thaliana (Mouse-ear cress).